The sequence spans 207 residues: Guanylate kinase (207 aa).

The Guanylate kinase-like domain occupies G4–R184. Position 11–18 (A11–S18) interacts with ATP.

The protein belongs to the guanylate kinase family.

The protein localises to the cytoplasm. The enzyme catalyses GMP + ATP = GDP + ADP. Functionally, essential for recycling GMP and indirectly, cGMP. The chain is Guanylate kinase from Aliivibrio fischeri (strain ATCC 700601 / ES114) (Vibrio fischeri).